Consider the following 69-residue polypeptide: UPF0337 protein DIP1660 (69 aa).

Basic and acidic residues-rich tracts occupy residues 1 to 19 (MSDFENKIEELGGKAKEAV) and 30 to 41 (DEGRADQTKADV). A disordered region spans residues 1-42 (MSDFENKIEELGGKAKEAVGEATENEQLADEGRADQTKADVK).

Belongs to the UPF0337 (CsbD) family.

The polypeptide is UPF0337 protein DIP1660 (Corynebacterium diphtheriae (strain ATCC 700971 / NCTC 13129 / Biotype gravis)).